Reading from the N-terminus, the 1250-residue chain is Probable autotransporter YfaL (1250 aa).

The signal sequence occupies residues 1–28 (MRIIFLRKEYLSLLPSMIASLFSANGVA). The interval 914-951 (RSQEVTPPSPPDPDPTPDPDPTPDPDPTPDPEPTPAYQ) is disordered. Repeat unit 1 spans residues 919–920 (TP). Residues 919-948 (TPPSPPDPDPTPDPDPTPDPDPTPDPEPTP) are 15 X 2 AA approximate tandem repeats of [DTPE]-P. The stretch at 921–922 (PS) is one 2; approximate repeat. The stretch at 923–924 (PP) is repeat 3. The 4; approximate repeat unit spans residues 925–926 (DP). Repeat copies occupy residues 927–928 (DP), 929–930 (TP), 931–932 (DP), 933–934 (DP), 935–936 (TP), 937–938 (DP), 939–940 (DP), 941–942 (TP), 943–944 (DP), 945–946 (EP), and 947–948 (TP). Positions 928-942 (PTPDPDPTPDPDPTP) are enriched in acidic residues. In terms of domain architecture, Autotransporter spans 980–1250 (AGGDGQTLNL…AGFLSMTVKW (271 aa)).

In terms of processing, an approximately 170 kDa protein is detected in the outer membrane, while a C-terminal 55 kDa fragment is detected in whole cells. The full-length putative autotransporter may be cleaved to release the mature protein from the outer membrane; Pefabloc SC, a Ser-Thr protease inhibitor prevents the appearance of the 55 kDa C--terminal fragment.

It is found in the periplasm. The protein localises to the secreted. Its subcellular location is the cell surface. The protein resides in the cell outer membrane. Its function is as follows. Probably an autotransporter. Upon overexpression shows increased adherence to polyvinyl chloride (PVC) plates, increased mature biofilm formation. The protein is Probable autotransporter YfaL (yfaL) of Escherichia coli (strain K12).